Reading from the N-terminus, the 232-residue chain is tRNA1(Val) (adenine(37)-N6)-methyltransferase (232 aa).

It belongs to the methyltransferase superfamily. tRNA (adenine-N(6)-)-methyltransferase family.

Its subcellular location is the cytoplasm. It carries out the reaction adenosine(37) in tRNA1(Val) + S-adenosyl-L-methionine = N(6)-methyladenosine(37) in tRNA1(Val) + S-adenosyl-L-homocysteine + H(+). Functionally, specifically methylates the adenine in position 37 of tRNA(1)(Val) (anticodon cmo5UAC). The chain is tRNA1(Val) (adenine(37)-N6)-methyltransferase from Haemophilus influenzae (strain 86-028NP).